We begin with the raw amino-acid sequence, 161 residues long: Large ribosomal subunit protein uL15 (161 aa).

The tract at residues 1-50 is disordered; that stretch reads MKLSDIADNAGSRKKRMRIGRGIGSGKGKTGGRGGKGQTARSGVRINGFE. The span at 21–37 shows a compositional bias: gly residues; sequence RGIGSGKGKTGGRGGKG.

This sequence belongs to the universal ribosomal protein uL15 family. As to quaternary structure, part of the 50S ribosomal subunit.

In terms of biological role, binds to the 23S rRNA. The chain is Large ribosomal subunit protein uL15 from Nitrobacter winogradskyi (strain ATCC 25391 / DSM 10237 / CIP 104748 / NCIMB 11846 / Nb-255).